A 502-amino-acid polypeptide reads, in one-letter code: Glycerol kinase (502 aa).

Threonine 14 is an ADP binding site. Residues threonine 14, threonine 15, and serine 16 each coordinate ATP. Position 14 (threonine 14) interacts with sn-glycerol 3-phosphate. Arginine 18 is a binding site for ADP. 3 residues coordinate sn-glycerol 3-phosphate: arginine 84, glutamate 85, and tyrosine 136. Residues arginine 84, glutamate 85, and tyrosine 136 each contribute to the glycerol site. The residue at position 232 (histidine 232) is a Phosphohistidine; by HPr. Sn-glycerol 3-phosphate is bound at residue aspartate 246. Glycerol contacts are provided by aspartate 246 and glutamine 247. ADP contacts are provided by threonine 268 and glycine 311. Threonine 268, glycine 311, glutamine 315, and glycine 412 together coordinate ATP. Positions 412 and 416 each coordinate ADP.

Belongs to the FGGY kinase family. In terms of assembly, homotetramer and homodimer (in equilibrium). The phosphoenolpyruvate-dependent sugar phosphotransferase system (PTS), including enzyme I, and histidine-containing protein (HPr) are required for the phosphorylation, which leads to the activation of the enzyme.

It catalyses the reaction glycerol + ATP = sn-glycerol 3-phosphate + ADP + H(+). Its pathway is polyol metabolism; glycerol degradation via glycerol kinase pathway; sn-glycerol 3-phosphate from glycerol: step 1/1. Its activity is regulated as follows. Activated by phosphorylation and inhibited by fructose 1,6-bisphosphate (FBP). In terms of biological role, key enzyme in the regulation of glycerol uptake and metabolism. Catalyzes the phosphorylation of glycerol to yield sn-glycerol 3-phosphate. The protein is Glycerol kinase of Streptococcus sanguinis (strain SK36).